The sequence spans 222 residues: Translation initiation factor 6 (222 aa).

It belongs to the eIF-6 family.

In terms of biological role, binds to the 50S ribosomal subunit and prevents its association with the 30S ribosomal subunit to form the 70S initiation complex. This is Translation initiation factor 6 from Methanothermobacter thermautotrophicus (strain ATCC 29096 / DSM 1053 / JCM 10044 / NBRC 100330 / Delta H) (Methanobacterium thermoautotrophicum).